We begin with the raw amino-acid sequence, 229 residues long: Putative N-acetylmannosamine-6-phosphate 2-epimerase (229 aa).

It belongs to the NanE family.

It carries out the reaction an N-acyl-D-glucosamine 6-phosphate = an N-acyl-D-mannosamine 6-phosphate. The protein operates within amino-sugar metabolism; N-acetylneuraminate degradation; D-fructose 6-phosphate from N-acetylneuraminate: step 3/5. Converts N-acetylmannosamine-6-phosphate (ManNAc-6-P) to N-acetylglucosamine-6-phosphate (GlcNAc-6-P). This is Putative N-acetylmannosamine-6-phosphate 2-epimerase from Escherichia coli O127:H6 (strain E2348/69 / EPEC).